Reading from the N-terminus, the 120-residue chain is Small ribosomal subunit protein bS6 (120 aa).

Residues 97 to 112 (SNEPSPILKNQSTENT) show a composition bias toward polar residues. The tract at residues 97-120 (SNEPSPILKNQSTENTPVIDVTAN) is disordered.

It belongs to the bacterial ribosomal protein bS6 family.

Its function is as follows. Binds together with bS18 to 16S ribosomal RNA. This chain is Small ribosomal subunit protein bS6, found in Rickettsia bellii (strain OSU 85-389).